A 590-amino-acid polypeptide reads, in one-letter code: Glutamine--fructose-6-phosphate aminotransferase [isomerizing] (590 aa).

Cysteine 2 functions as the Nucleophile; for GATase activity in the catalytic mechanism. Residues 2–221 (CGIIGIVSSK…DGELGFITTS (220 aa)) enclose the Glutamine amidotransferase type-2 domain. 2 SIS domains span residues 286–422 (IIAE…DNTN) and 445–580 (IGEE…PDKP). Lysine 585 functions as the For Fru-6P isomerization activity in the catalytic mechanism.

In terms of assembly, homodimer.

The protein resides in the cytoplasm. It catalyses the reaction D-fructose 6-phosphate + L-glutamine = D-glucosamine 6-phosphate + L-glutamate. Catalyzes the first step in hexosamine metabolism, converting fructose-6P into glucosamine-6P using glutamine as a nitrogen source. In Sulfolobus acidocaldarius (strain ATCC 33909 / DSM 639 / JCM 8929 / NBRC 15157 / NCIMB 11770), this protein is Glutamine--fructose-6-phosphate aminotransferase [isomerizing].